Reading from the N-terminus, the 540-residue chain is Chaperonin GroEL (540 aa).

ATP contacts are provided by residues Thr30–Pro33, Lys51, Asp87–Thr91, Gly415, Asn479–Ala481, and Asp495.

It belongs to the chaperonin (HSP60) family. In terms of assembly, forms a cylinder of 14 subunits composed of two heptameric rings stacked back-to-back. Interacts with the co-chaperonin GroES.

The protein resides in the cytoplasm. It catalyses the reaction ATP + H2O + a folded polypeptide = ADP + phosphate + an unfolded polypeptide.. Its function is as follows. Together with its co-chaperonin GroES, plays an essential role in assisting protein folding. The GroEL-GroES system forms a nano-cage that allows encapsulation of the non-native substrate proteins and provides a physical environment optimized to promote and accelerate protein folding. The sequence is that of Chaperonin GroEL from Raoultella planticola (Klebsiella planticola).